The following is a 487-amino-acid chain: MTELFIDGAWVAGSGPVFASRNPGTDAVAWQGESASAADVDRAVASARRAFAGWSALDFEARCEIVKRFAALLTERKEAIATAIGRETGKPLWEARTEVASMAAKVGISIQAYQERTGEKRQDMADGVAVLRHRPHGVVAVFGPYNFPGHLPNGHIVPALIAGNTVVFKPSELAPGVARATVEVWQEAGLPAGVLNLVQGEKDTGIALANHRQIDGLFFTGSSDTGTLLHKQFGGRPEIVLALEMGGNNPLVIGEVEDIDAAVHHTIQSAFLSAGQRCTCARRIFVPQGAFGDRFLARFADVTSKITADVFDADPQPFMGAVISARAAAKLVDAQARLVEQGAKPIVAMAQRDPRLGFVNAAIVDVTGVANLPDEEHFGPLAQVVRYATFDEAIERANDTAFGLSAGLLADDAKVWEHFRRTIRAGIVNWNRPTNGASSAAPFGGTGRSGNHRPSAYYAADYCAYPMASVESTQLTLPASLSPGLHF.

221–226 (GSSDTG) contacts NAD(+). Active-site residues include Glu244 and Cys278.

It belongs to the aldehyde dehydrogenase family. AstD subfamily.

The catalysed reaction is N-succinyl-L-glutamate 5-semialdehyde + NAD(+) + H2O = N-succinyl-L-glutamate + NADH + 2 H(+). It functions in the pathway amino-acid degradation; L-arginine degradation via AST pathway; L-glutamate and succinate from L-arginine: step 4/5. Catalyzes the NAD-dependent reduction of succinylglutamate semialdehyde into succinylglutamate. The chain is N-succinylglutamate 5-semialdehyde dehydrogenase from Burkholderia cenocepacia (strain HI2424).